Here is a 162-residue protein sequence, read N- to C-terminus: NADH-ubiquinone oxidoreductase 24 kDa subunit homolog C11E3.12, mitochondrial (162 aa).

[2Fe-2S] cluster is bound by residues Cys-88, Cys-93, Cys-125, and Cys-129.

This sequence belongs to the complex I 24 kDa subunit family. The cofactor is [2Fe-2S] cluster.

Its subcellular location is the mitochondrion. This chain is NADH-ubiquinone oxidoreductase 24 kDa subunit homolog C11E3.12, mitochondrial, found in Schizosaccharomyces pombe (strain 972 / ATCC 24843) (Fission yeast).